The following is a 257-amino-acid chain: Glucanase inhibitor protein 1 (257 aa).

Positions 1–28 are cleaved as a signal peptide; sequence MKVFPALTSALVALGTAGVEAEHVQRSL. The Peptidase S1 domain maps to 29-256; sequence VMGGGTVPVG…GLEWINSVIK (228 aa). Cys-56 and Cys-72 are oxidised to a cystine. N-linked (GlcNAc...) asparagine glycans are attached at residues Asn-107 and Asn-180. 2 disulfide bridges follow: Cys-181-Cys-191 and Cys-201-Cys-232. A glycan (N-linked (GlcNAc...) asparagine) is linked at Asn-213.

This sequence belongs to the peptidase S1 family. As to quaternary structure, interacts with host endoglucanases EGaseA.

It localises to the secreted. Functionally, secreted effector that suppresses host plant glucan elicitor-mediated defense responses. Targets host endoglucanase EGaseA and inhibits the EGaseA-mediated release of elicitor-active glucan oligosaccharides from P.sojae cell walls. The polypeptide is Glucanase inhibitor protein 1 (Phytophthora sojae (Soybean stem and root rot agent)).